The sequence spans 200 residues: Snake venom serine protease VaSP1 (200 aa).

Residues 1–200 form the Peptidase S1 domain; it reads VIGGDECNIN…EIQGIVSYGK (200 aa). Active-site charge relay system residues include Asp-88 and Ser-182.

In terms of assembly, monomer. N-glycosylated. The protein exist in multiple isoforms. As to expression, expressed by the venom gland.

It is found in the secreted. Its activity is regulated as follows. Inhibited by Pefabloc (90% inhibition), DTT (90%), Zn(2+) (80%), trypsin inhibitor II (50%), and benzamidine (45%), but not inhibited by EDTA, Ca(2+), Mg(2+) and L-Cys. Its function is as follows. Snake venom serine protease active on several blood coagulation enzymes. It completely cleaves fibrinogen Aalpha chain (FGA) after 120 minutes, partially cleaves Bbeta chain (FGB) (overnight) and has no activity on gamma chain. It does not release fibrinopeptides A and/or B exclusively, since the enzyme does not provoke fibrin polymerisation. It also degrades fibrin as efficiently as plasmin, and exhibits potent ability to cleave plasminogen and prothrombin, as well as heavy chain of factor X (F10). In vitro, it cleaves insulin B-chain (at positions His38-Leu39, Ala40-Leu41 and Tyr16-Leu17). This is Snake venom serine protease VaSP1 from Vipera ammodytes ammodytes (Western sand viper).